We begin with the raw amino-acid sequence, 63 residues long: Protein DsrB (63 aa).

Belongs to the DsrB family.

The sequence is that of Protein DsrB from Yersinia pseudotuberculosis serotype O:3 (strain YPIII).